The chain runs to 352 residues: Neutral protease 2 homolog ATEG_04941 (352 aa).

Residues 1-19 (MRFTALATAILPLACNVLA) form the signal peptide. Positions 20–175 (LPAKTGEAPK…ASAVKPLDKR (156 aa)) are excised as a propeptide. Disulfide bonds link C181–C253 and C260–C278. Position 303 (H303) interacts with Zn(2+). Residue E304 is part of the active site. Zn(2+) is bound by residues H307 and D318.

This sequence belongs to the peptidase M35 family. Zn(2+) serves as cofactor.

It localises to the secreted. The enzyme catalyses Preferential cleavage of bonds with hydrophobic residues in P1'. Also 3-Asn-|-Gln-4 and 8-Gly-|-Ser-9 bonds in insulin B chain.. Functionally, secreted metalloproteinase that allows assimilation of proteinaceous substrates. Shows high activities on basic nuclear substrates such as histone and protamine. The sequence is that of Neutral protease 2 homolog ATEG_04941 from Aspergillus terreus (strain NIH 2624 / FGSC A1156).